Consider the following 447-residue polypeptide: Phosphoglucosamine mutase (447 aa).

Ser102 serves as the catalytic Phosphoserine intermediate. Residues Ser102, Asp241, Asp243, and Asp245 each coordinate Mg(2+). Ser102 carries the phosphoserine modification.

The protein belongs to the phosphohexose mutase family. Requires Mg(2+) as cofactor. In terms of processing, activated by phosphorylation.

It catalyses the reaction alpha-D-glucosamine 1-phosphate = D-glucosamine 6-phosphate. Functionally, catalyzes the conversion of glucosamine-6-phosphate to glucosamine-1-phosphate. The protein is Phosphoglucosamine mutase of Hamiltonella defensa subsp. Acyrthosiphon pisum (strain 5AT).